A 166-amino-acid chain; its full sequence is Small ribosomal subunit protein uS4 (166 aa).

An S4 RNA-binding domain is found at 103–165; the sequence is RRLQTVVYKK…PTSPYFKKAQ (63 aa).

It belongs to the universal ribosomal protein uS4 family. Part of the 30S ribosomal subunit. Contacts protein S5. The interaction surface between S4 and S5 is involved in control of translational fidelity.

One of the primary rRNA binding proteins, it binds directly to 16S rRNA where it nucleates assembly of the body of the 30S subunit. Functionally, with S5 and S12 plays an important role in translational accuracy. This Ignicoccus hospitalis (strain KIN4/I / DSM 18386 / JCM 14125) protein is Small ribosomal subunit protein uS4.